The primary structure comprises 189 residues: UPF0301 protein PputGB1_5045 (189 aa).

Belongs to the UPF0301 (AlgH) family.

This is UPF0301 protein PputGB1_5045 from Pseudomonas putida (strain GB-1).